The sequence spans 881 residues: Alanine--tRNA ligase (881 aa).

H565, H569, C672, and H676 together coordinate Zn(2+).

This sequence belongs to the class-II aminoacyl-tRNA synthetase family. The cofactor is Zn(2+).

The protein resides in the cytoplasm. It catalyses the reaction tRNA(Ala) + L-alanine + ATP = L-alanyl-tRNA(Ala) + AMP + diphosphate. Its function is as follows. Catalyzes the attachment of alanine to tRNA(Ala) in a two-step reaction: alanine is first activated by ATP to form Ala-AMP and then transferred to the acceptor end of tRNA(Ala). Also edits incorrectly charged Ser-tRNA(Ala) and Gly-tRNA(Ala) via its editing domain. This chain is Alanine--tRNA ligase, found in Novosphingobium aromaticivorans (strain ATCC 700278 / DSM 12444 / CCUG 56034 / CIP 105152 / NBRC 16084 / F199).